The sequence spans 122 residues: Dihydroneopterin aldolase (122 aa).

Substrate is bound by residues Glu-21, Tyr-53, and 72–73 (VE). Catalysis depends on Lys-98, which acts as the Proton donor/acceptor.

This sequence belongs to the DHNA family. In terms of assembly, homooctamer.

It catalyses the reaction 7,8-dihydroneopterin = 6-hydroxymethyl-7,8-dihydropterin + glycolaldehyde. The catalysed reaction is 7,8-dihydroneopterin = 7,8-dihydromonapterin. The protein operates within cofactor biosynthesis; tetrahydrofolate biosynthesis; 2-amino-4-hydroxy-6-hydroxymethyl-7,8-dihydropteridine diphosphate from 7,8-dihydroneopterin triphosphate: step 3/4. Functionally, catalyzes the conversion of 7,8-dihydroneopterin to 6-hydroxymethyl-7,8-dihydropterin. Can use L-threo-dihydroneopterin and D-erythro-dihydroneopterin as substrates for the formation of 6-hydroxymethyldihydropterin, but it can also catalyze the epimerization of carbon 2' of dihydroneopterin to dihydromonapterin at appreciable velocity. The polypeptide is Dihydroneopterin aldolase (folB) (Escherichia coli O6:H1 (strain CFT073 / ATCC 700928 / UPEC)).